The following is a 197-amino-acid chain: ATP-dependent Clp protease proteolytic subunit 1 (197 aa).

Ser-88 functions as the Nucleophile in the catalytic mechanism. His-113 is an active-site residue.

This sequence belongs to the peptidase S14 family. As to quaternary structure, fourteen ClpP subunits assemble into 2 heptameric rings which stack back to back to give a disk-like structure with a central cavity, resembling the structure of eukaryotic proteasomes.

It localises to the cytoplasm. The enzyme catalyses Hydrolysis of proteins to small peptides in the presence of ATP and magnesium. alpha-casein is the usual test substrate. In the absence of ATP, only oligopeptides shorter than five residues are hydrolyzed (such as succinyl-Leu-Tyr-|-NHMec, and Leu-Tyr-Leu-|-Tyr-Trp, in which cleavage of the -Tyr-|-Leu- and -Tyr-|-Trp bonds also occurs).. Cleaves peptides in various proteins in a process that requires ATP hydrolysis. Has a chymotrypsin-like activity. Plays a major role in the degradation of misfolded proteins. The protein is ATP-dependent Clp protease proteolytic subunit 1 of Leifsonia xyli subsp. xyli (strain CTCB07).